Reading from the N-terminus, the 132-residue chain is Keratin, high-sulfur matrix protein, IIIA3 (132 aa).

In terms of biological role, the keratin products of mammalian epidermal derivatives such as wool and hair consist of microfibrils embedded in a rigid matrix of other proteins. The matrix proteins include the high-sulfur and high-tyrosine keratins, having molecular weights of 6-20 kDa, whereas the microfibrils contain the larger, low-sulfur keratins (40-56 kDa). The polypeptide is Keratin, high-sulfur matrix protein, IIIA3 (Capra hircus (Goat)).